Consider the following 143-residue polypeptide: Hemoglobin subunit alpha (143 aa).

At Ser-2 the chain carries N-acetylserine. The 142-residue stretch at 2 to 143 folds into the Globin domain; the sequence is SLSDKDKAAV…LALALSEKYR (142 aa). O2 is bound at residue His-60. Residue His-89 participates in heme b binding.

Belongs to the globin family. In terms of assembly, heterotetramer of two alpha chains and two beta chains. In terms of tissue distribution, red blood cells.

In terms of biological role, involved in oxygen transport from gills to the various peripheral tissues. This chain is Hemoglobin subunit alpha (hba), found in Cyprinus carpio (Common carp).